The sequence spans 493 residues: Rho guanine nucleotide exchange factor 9 (493 aa).

The 60-residue stretch at 15–74 (DSIVSAEAVWDHVTMANRGVAFKAGDVIKVLDASNKDWWWGQIDDEEGWFPASFVRLWVN) folds into the SH3 domain. An interaction with GPHN region spans residues 107–117 (RDQMRANVINE). The DH domain occupies 110–294 (MRANVINEIM…RNVTQQINER (185 aa)). Positions 325-432 (ELIYTGEMAW…WLRAFREERK (108 aa)) constitute a PH domain. Residues 453-473 (AMTVRKASKQKGRVGEEENQS) are disordered.

Interacts with GPHN. As to expression, detected in brain, throughout the gray matter. Detected at low levels in heart and skeletal muscle.

The protein resides in the cytoplasm. Its subcellular location is the postsynaptic density. Its function is as follows. Acts as a guanine nucleotide exchange factor (GEF) for CDC42. Promotes formation of GPHN clusters. The protein is Rho guanine nucleotide exchange factor 9 (Arhgef9) of Rattus norvegicus (Rat).